Here is a 272-residue protein sequence, read N- to C-terminus: HMP-PP phosphatase (272 aa).

Catalysis depends on Asp-8, which acts as the Nucleophile. Residues Asp-8, Asp-10, and Asp-212 each contribute to the Mg(2+) site.

The protein belongs to the HAD-like hydrolase superfamily. Cof family. The cofactor is Mg(2+).

The catalysed reaction is 4-amino-2-methyl-5-(diphosphooxymethyl)pyrimidine + H2O = 4-amino-2-methyl-5-(phosphooxymethyl)pyrimidine + phosphate + H(+). Functionally, catalyzes the hydrolysis of 4-amino-2-methyl-5-hydroxymethylpyrimidine pyrophosphate (HMP-PP) to 4-amino-2-methyl-5-hydroxymethylpyrimidine phosphate (HMP-P). This is HMP-PP phosphatase from Escherichia coli O157:H7.